The following is a 256-amino-acid chain: 5-keto-4-deoxy-D-glucarate aldolase (256 aa).

His-50 (proton acceptor) is an active-site residue. A substrate-binding site is contributed by Gln-151. Glu-153 contributes to the Mg(2+) binding site. The substrate site is built by Ser-178 and Asp-179. Asp-179 serves as a coordination point for Mg(2+).

Belongs to the HpcH/HpaI aldolase family. KDGluc aldolase subfamily. In terms of assembly, homohexamer; trimer of dimers. Mg(2+) is required as a cofactor.

The enzyme catalyses 5-dehydro-4-deoxy-D-glucarate = 2-hydroxy-3-oxopropanoate + pyruvate. The catalysed reaction is 2-dehydro-3-deoxy-D-glucarate = 2-hydroxy-3-oxopropanoate + pyruvate. It participates in carbohydrate acid metabolism; galactarate degradation; D-glycerate from galactarate: step 2/3. Functionally, catalyzes the reversible retro-aldol cleavage of both 5-keto-4-deoxy-D-glucarate and 2-keto-3-deoxy-D-glucarate to pyruvate and tartronic semialdehyde. The chain is 5-keto-4-deoxy-D-glucarate aldolase from Escherichia coli (strain ATCC 8739 / DSM 1576 / NBRC 3972 / NCIMB 8545 / WDCM 00012 / Crooks).